Here is a 289-residue protein sequence, read N- to C-terminus: uncharacterized protein (289 aa).

The next 10 helical transmembrane spans lie at 7 to 27, 33 to 53, 65 to 85, 92 to 112, 123 to 143, 148 to 168, 182 to 202, 212 to 232, 241 to 261, and 265 to 285; these read LLLA…KIGL, FNLA…WVFW, WLHL…FQFL, ATNA…WGLV, GVFL…LEFF, IFGD…TVLG, AYAF…SGFA, VAAL…VWYY, SVAV…FYAL, and PDFF…LTTA. EamA domains lie at 14–136 and 159–285; these read LIWA…LIVS and FLWA…LTTA.

Belongs to the EamA transporter family.

It is found in the cell membrane. This is an uncharacterized protein from Archaeoglobus fulgidus (strain ATCC 49558 / DSM 4304 / JCM 9628 / NBRC 100126 / VC-16).